The following is a 249-amino-acid chain: Proteasome subunit alpha 2 (249 aa).

Residue Met1 is modified to N-acetylmethionine.

The protein belongs to the peptidase T1A family. As to quaternary structure, the 20S proteasome core is composed of 14 alpha and 14 beta subunits that assemble into four stacked heptameric rings, resulting in a barrel-shaped structure. The two inner rings, each composed of seven catalytic beta subunits, are sandwiched by two outer rings, each composed of seven alpha subunits. H.volcanii produces at least 2 types of 20S proteasomes: an alpha1-beta proteasome and a proteasome containing all three subunits (alpha1, alpha2, and beta) that appears to be asymmetrical with homo-oligomeric alpha1 and alpha2 rings positioned on separate ends. The catalytic chamber with the active sites is on the inside of the barrel. Has probably a gated structure, the ends of the cylinder being occluded by the N-termini of the alpha-subunits. Is likely capped at one or both ends by the proteasome regulatory ATPase, PAN.

Its subcellular location is the cytoplasm. With respect to regulation, the formation of the proteasomal ATPase PAN-20S proteasome complex, via the docking of the C-termini of PAN into the intersubunit pockets in the alpha-rings, triggers opening of the gate for substrate entry. Interconversion between the open-gate and close-gate conformations leads to a dynamic regulation of the 20S proteasome proteolysis activity. Its function is as follows. Component of the proteasome core, a large protease complex with broad specificity involved in protein degradation. The H.volcanii alpha1-beta-alpha2 proteasome is able to cleave oligopeptides after Tyr and thus displays chymotrypsin-like activity. This is Proteasome subunit alpha 2 from Haloferax volcanii (strain ATCC 29605 / DSM 3757 / JCM 8879 / NBRC 14742 / NCIMB 2012 / VKM B-1768 / DS2) (Halobacterium volcanii).